The following is a 311-amino-acid chain: tRNA-cytidine(32) 2-sulfurtransferase (311 aa).

The PP-loop motif motif lies at 47–52 (SGGKDS). 3 residues coordinate [4Fe-4S] cluster: Cys-122, Cys-125, and Cys-213.

Belongs to the TtcA family. In terms of assembly, homodimer. The cofactor is Mg(2+). [4Fe-4S] cluster is required as a cofactor.

It localises to the cytoplasm. It catalyses the reaction cytidine(32) in tRNA + S-sulfanyl-L-cysteinyl-[cysteine desulfurase] + AH2 + ATP = 2-thiocytidine(32) in tRNA + L-cysteinyl-[cysteine desulfurase] + A + AMP + diphosphate + H(+). The protein operates within tRNA modification. Catalyzes the ATP-dependent 2-thiolation of cytidine in position 32 of tRNA, to form 2-thiocytidine (s(2)C32). The sulfur atoms are provided by the cysteine/cysteine desulfurase (IscS) system. This is tRNA-cytidine(32) 2-sulfurtransferase from Shigella flexneri serotype 5b (strain 8401).